Here is a 234-residue protein sequence, read N- to C-terminus: MEFSSAFESGVLLQRYKRFLTDITLDNGEEVTIHCPNTGSMRNCLFVGEKVWFSVSDNPKRKYSRTWELAQTPEGHIIGINTGRANALAEEAINNGIITELQGYGSLRREVKYGSENSRIDILLEDADKANCYIEVKSCTLLEQGLGYFPDAVTTRGQKHLRELMEMVEQGQRAVLLFVVQHSGINCVQAAAHIDPSYAALLSEAHAKGVEIIAYKADSSPIEARLVKSCPVRL.

Belongs to the SfsA family.

The protein is Sugar fermentation stimulation protein homolog of Shewanella halifaxensis (strain HAW-EB4).